We begin with the raw amino-acid sequence, 142 residues long: Lysosomal enzyme trafficking factor (142 aa).

2 helical membrane passes run 8–28 and 76–96; these read MGWIGVGLYLLASVAAVYYIF and LLPFWVWATIFLLPYLQVFLF.

Belongs to the LYSET family.

Its subcellular location is the golgi apparatus membrane. Functionally, required for mannose-6-phosphate-dependent trafficking of lysosomal enzymes. LYSET bridges GlcNAc-1-phosphate transferase (GNPTAB), to the membrane-bound transcription factor site-1 protease (MBTPS1), thus allowing proteolytic activation of the GNPTAB. GNPTAB is involved in the regulation of M6P-dependent Golgi-to-lysosome trafficking of lysosomal enzymes. LYSET is thus an essential factor for maturation and delivery of lysosomal hydrolases. This chain is Lysosomal enzyme trafficking factor (tmem251), found in Danio rerio (Zebrafish).